Here is a 620-residue protein sequence, read N- to C-terminus: Cilia- and flagella-associated protein 52 (620 aa).

11 WD repeats span residues 62-106 (GHGN…LLAR), 109-150 (LHKG…AICG), 156-195 (LNVGNATNVIFSRCRDEMFMTAGNGTIRVWELDLPNRKIW), 288-327 (QLQGGITSITLRGEGHQFLVGTEESHIYRVSFTDFKETLI), 330-369 (CHFDAVEDIVFPFGTAELFATCAKKDIRVWHTSSNRELLR), 372-411 (VPNMTCHGIDFMRDGKSIISAWNDGKIRAFAPETGRLMYV), 415-454 (AHRIGVTAIATTSDCKRVISGGGEGEVRVWQIGCQTQKLE), 459-498 (EHKSSVSCIRVKRNNEECVTASTDGTCIIWDLVRLRRNQM), 500-539 (LANTLFQCVCYHPEEFQIITSGTDRKIAYWEVFDGTVIRE), 543-582 (SLSGSINGMDITQEGVHFVTGGNDHLVKVWDYNEGEVTHV), and 585-620 (GHSGNITRIRISPGNQYIVSVSADGAILRWKYPYTS).

It belongs to the CFAP52 family. Microtubule inner protein component of sperm flagellar doublet microtubules. Interacts with BRCA2. Interacts with the CCT chaperonin complex. Interacts with HSP70. Interacts with AK8. Interacts with CFAP45. Interacts with DNAI1. Interacts with IQDC. Expressed in respiratory cells and sperm (at protein level). Highly expressed in testis. Up-regulated in hepatocellular carcinoma (HCC).

The protein localises to the cytoplasm. It localises to the cytoskeleton. The protein resides in the cilium axoneme. It is found in the flagellum axoneme. Functionally, microtubule inner protein (MIP) part of the dynein-decorated doublet microtubules (DMTs) in cilia axoneme. Important for proper ciliary and flagellar beating. May act in cooperation with CFAP45 and axonemal dynein subunit DNAH11. May play a role in cell growth and/or survival. This is Cilia- and flagella-associated protein 52 from Homo sapiens (Human).